A 205-amino-acid chain; its full sequence is DNA-directed RNA polymerase RPB5 homolog (205 aa).

It belongs to the archaeal RpoH/eukaryotic RPB5 RNA polymerase subunit family. Part of the viral DNA-directed RNA polymerase that consists of 8 polII-like subunits (RPB1, RPB2, RPB3, RPB5, RPB6, RPB7, RPB9, RPB10), a capping enzyme and a termination factor.

The protein localises to the host cytoplasm. It is found in the virion. Component of the DNA-directed RNA polymerase (RNAP) that catalyzes the transcription in the cytoplasm of viral DNA into RNA using the four ribonucleoside triphosphates as substrates. The chain is DNA-directed RNA polymerase RPB5 homolog from Ornithodoros (relapsing fever ticks).